A 443-amino-acid chain; its full sequence is Threonine/serine transporter TdcC (443 aa).

11 consecutive transmembrane segments (helical) span residues 22–42, 44–64, 97–117, 140–160, 163–183, 207–227, 259–279, 319–339, 366–386, 389–409, and 423–443; these read TTWT…FFPI, AGFG…PIAF, GVVI…IYGV, VVAL…KDLM, VMSY…LSLI, ILVT…FSPI, ASML…FTLS, ASII…LGTL, LSMV…PNIL, IEAM…MYAI, and DNLF…YKLF.

The protein belongs to the amino acid/polyamine transporter 2 family. SdaC/TdcC subfamily.

The protein resides in the cell inner membrane. It catalyses the reaction L-threonine(in) + H(+)(in) = L-threonine(out) + H(+)(out). The catalysed reaction is L-serine(in) + H(+)(in) = L-serine(out) + H(+)(out). Functionally, involved in the import of threonine and serine into the cell, with the concomitant import of a proton (symport system). The chain is Threonine/serine transporter TdcC from Klebsiella pneumoniae (strain 342).